The sequence spans 202 residues: ATP-dependent Clp protease proteolytic subunit (202 aa).

The active-site Nucleophile is the S106. Residue H131 is part of the active site.

Belongs to the peptidase S14 family. In terms of assembly, fourteen ClpP subunits assemble into 2 heptameric rings which stack back to back to give a disk-like structure with a central cavity, resembling the structure of eukaryotic proteasomes.

It localises to the cytoplasm. It carries out the reaction Hydrolysis of proteins to small peptides in the presence of ATP and magnesium. alpha-casein is the usual test substrate. In the absence of ATP, only oligopeptides shorter than five residues are hydrolyzed (such as succinyl-Leu-Tyr-|-NHMec, and Leu-Tyr-Leu-|-Tyr-Trp, in which cleavage of the -Tyr-|-Leu- and -Tyr-|-Trp bonds also occurs).. Cleaves peptides in various proteins in a process that requires ATP hydrolysis. Has a chymotrypsin-like activity. Plays a major role in the degradation of misfolded proteins. In Acidovorax ebreus (strain TPSY) (Diaphorobacter sp. (strain TPSY)), this protein is ATP-dependent Clp protease proteolytic subunit.